The sequence spans 1088 residues: MLHIKDLIWTLYFIGTAVALEVNIVPDQGEISLGESKFFLCQVSGEATDISWYSPTGEKLVTQQQISVVRSDDYTSTLTIYNASSQDAGIYKCVASNEAEGESEGTVNLKIYQKLTFKNAPTPQEFKEGEDAVIICDVSSSIPSIITWRHKGKDVIFKKDVRFVVLANNYLQIRGIKKTDEGTYRCEGRILARGEINYKDIQVIVNVPPTIQARQLRVNATANMAESVVLSCDADGFPDPEISWLKKGEPIEDGEEKISFNEDQSEMTIHHVEKDDEAEYSCIANNQAGEAEATILLKVYAKPKITYVENKTAVELDEITLTCEASGDPIPSITWRTAVRNISSEATTLDGHIVVKEHIRMSALTLKDIQYTDAGEYFCIASNPIGVDMQAMYFEVQYAPKIRGPVVVYTWEGNPVNITCEVFAHPRAAVTWFRDGQLLPSSNFSNIKIYSGPTSSSLEVNPDSENDFGNYNCTAINTIGHEFSEFILVQADTPSSPAIRKVEPYSSTVMIVFDEPDSTGGVPILKYKAEWRVIGHEKWHTKYYDAKEVNAESIITVMGLKPETSYMVKLSAMNGKGLGDSTPSQEFTTQPVREPSAPKLVGHLSEDGNSIKVDILKQDDGGSPIRHYLVNYRALNALEWKPEMRVPSNSHHVMLKALEWNVDYEVIVVAENQQGKSKPALLSFRTTAKPTATTATASAGTGLGTGAIVGILIVIFVLLLVVVDVTCFFLNKCGLLMCIAVNFCGKAGPGAKGKDIEEGKAAFSKDESKEPIVEVRTEEERTPNHDGSNQIEPNETTPLTEPEHPAAVEDMLPSVTTVTTNSDTITETFATAQNSPTSETTTLTSSTAPPPTTAPDSNTIQSIQATPSKAEAPTTSSPPPTSSPKVAPLVDLSDTPTNNPSKVVANQAGPLNPSAATSAAEPPTVIIKPVTTVPPNAASPPPTPEPKQVKQEQSGTKSPEKEEAQPSTVKNPTEATKDESASLSNTKPLQDEDFQIDGGTFKTPEIDLAKDVFAALGTATPTAVASGKASELVSSTADTSVPLDSAKTEKTQVEEKSKPEEIDVKGTPAEVKTVPNEATQTNANESKA.

A signal peptide spans 1–19 (MLHIKDLIWTLYFIGTAVA). Ig-like C2-type domains are found at residues 20 to 108 (LEVN…GTVN), 113 to 202 (QKLT…KDIQ), 209 to 294 (PTIQ…AEAT), 303 to 397 (PKIT…FEVQ), and 400 to 484 (PKIR…HEFS). Topologically, residues 20–705 (LEVNIVPDQG…TASAGTGLGT (686 aa)) are extracellular. 2 disulfide bridges follow: C41/C93 and C136/C186. N82 carries an N-linked (GlcNAc...) asparagine glycan. Heparin-binding positions include 149–153 (RHKGK) and 158–162 (KKDVR). Residue N219 is glycosylated (N-linked (GlcNAc...) asparagine). C232 and C282 are joined by a disulfide. Residues N310, N341, N417, N443, and N472 are each glycosylated (N-linked (GlcNAc...) asparagine). Cysteines 323 and 379 form a disulfide. An intrachain disulfide couples C420 to C473. 2 consecutive Fibronectin type-III domains span residues 493–592 (TPSS…TQPV) and 594–690 (EPSA…TAKP). Residues 706–723 (GAIVGILIVIFVLLLVVV) form a helical membrane-spanning segment. Over 724–1088 (DVTCFFLNKC…TQTNANESKA (365 aa)) the chain is Cytoplasmic. Residues 758 to 784 (EGKAAFSKDESKEPIVEVRTEEERTPN) show a composition bias toward basic and acidic residues. Disordered regions lie at residues 758–802 (EGKA…LTEP), 829–1000 (FATA…DGGT), and 1024–1088 (VASG…ESKA). 3 stretches are compositionally biased toward low complexity: residues 835–847 (SPTSETTTLTSST), 854–875 (APDSNTIQSIQATPSKAEAPTT), and 913–936 (PSAATSAAEPPTVIIKPVTTVPPN). A compositionally biased stretch (polar residues) spans 965–974 (QPSTVKNPTE). The span at 1046 to 1064 (AKTEKTQVEEKSKPEEIDV) shows a compositional bias: basic and acidic residues. Polar residues predominate over residues 1076–1088 (NEATQTNANESKA).

Polysialylated by ST8SIA2 and ST8SIA4. Polysialylation modulates cell interactions by confering both attractive and repulsive properties that are highly regulated by ST8SIA2 and ST8SIA4. Polysialylation is formed on a-2,3-linked sialic acid of core glycans. In terms of tissue distribution, expressed in neuron and in presumptive neural tissue.

It is found in the cell membrane. Functionally, this protein is a cell adhesion molecule involved in neuron-neuron adhesion, neurite fasciculation, outgrowth of neurites, etc. This chain is Neural cell adhesion molecule 1-A, found in Xenopus laevis (African clawed frog).